The sequence spans 160 residues: Transcription elongation factor GreA (160 aa).

Residues 43 to 75 (LSENAEYEAAREQQAQMESKIVDLENKLTRASI) adopt a coiled-coil conformation.

Belongs to the GreA/GreB family.

Functionally, necessary for efficient RNA polymerase transcription elongation past template-encoded arresting sites. The arresting sites in DNA have the property of trapping a certain fraction of elongating RNA polymerases that pass through, resulting in locked ternary complexes. Cleavage of the nascent transcript by cleavage factors such as GreA or GreB allows the resumption of elongation from the new 3'terminus. GreA releases sequences of 2 to 3 nucleotides. This is Transcription elongation factor GreA from Prosthecochloris aestuarii (strain DSM 271 / SK 413).